The sequence spans 468 residues: MTIVTRFAPSPTGFLHIGGARTALFNWLYARGHGGKFLLRIEDTDRARSTQAAVDAILDGLDWLGLEWDGDPISQFERKDRHAEVAHEMLRRGMAYRCYASPEELEAMKEEQRRQGLPMRYDGRWRDRDPSEAPAGVNPVIRLKAPQEGETVVRDHVQGEVRVQNAQLDDMILLRSDGTPTYLLAVVVDDYDMGVTHVVRGDDHLTNTFRQLQIYAAMGWTPPEYAHVPLIHGPDGAKLSKRHGALGVDAYRDMGYLPETMRNYLLRLGWSHGDDEIISTDQAKAWFNLDDIGRSPSRLDFAKLDNLNGHYIRQSDDARLVSLVVPMVEKRLGRPLTGSEHARLLAAMPGFKPRVKTLVELADGCLFLFALRPLAMDDKAAALLTPEAKAQLGELHALFSGLGDWTGGALEQAVRDFAERTGLKLGKVAQPLRAALTGSTVSPPIFEVAEVLGRTETLERIDDARKAG.

A 'HIGH' region motif is present at residues 9–19 (PSPTGFLHIGG). Residues 238 to 242 (KLSKR) carry the 'KMSKS' region motif. An ATP-binding site is contributed by Lys-241.

The protein belongs to the class-I aminoacyl-tRNA synthetase family. Glutamate--tRNA ligase type 1 subfamily. Monomer.

It localises to the cytoplasm. It carries out the reaction tRNA(Glu) + L-glutamate + ATP = L-glutamyl-tRNA(Glu) + AMP + diphosphate. Its function is as follows. Catalyzes the attachment of glutamate to tRNA(Glu) in a two-step reaction: glutamate is first activated by ATP to form Glu-AMP and then transferred to the acceptor end of tRNA(Glu). In Rhodospirillum centenum (strain ATCC 51521 / SW), this protein is Glutamate--tRNA ligase 2.